The primary structure comprises 455 residues: MIAVAILAAGKGTRMRSNLPKVLHQLGGKSLIERVLSSTQNLSPSRQIVIVGYSADQVRTEMQGWPNLEFVEQTEQLGTGHAVQQVLPVMEGFEGDLLVLNGDVPLLRPGTLQKMLATHQEHQNAATILTAQLPNPKGYGRVFCDAQMHLQEIIEDRDCTPAQRQNQRINAGVYCFRWSALAKVLPNLKAENDQKEYYLTDAVNYLDPVMVLDVDDYQEILGINDRKQLATAYKILQDRIKDDWLVAGVTIMDPDSITIDETVELGTDVIIEPQTHLRGDTKIDTGSRIGPGSLIENSHIGTNVQVLYSVISDSRVGDNSRIGPYTHLRGNVQIGEKCRVGNFVEMKKTTIGDRTNVAHLSYLGDATLGTQVNIGAGTITANYDGVNKHPTQIGDRTKTGANSVLVAPITLGANVTVAAGSTITKNVDDDVLVVARQRQSVLPGWRPISSKQTEK.

The interval 1–226 (MIAVAILAAG…YQEILGINDR (226 aa)) is pyrophosphorylase. Residues 7–10 (LAAG), Lys21, Gln73, and 78–79 (GT) each bind UDP-N-acetyl-alpha-D-glucosamine. Asp103 serves as a coordination point for Mg(2+). UDP-N-acetyl-alpha-D-glucosamine-binding residues include Gly140, Glu155, Asn170, and Asn224. Asn224 contributes to the Mg(2+) binding site. A linker region spans residues 227-247 (KQLATAYKILQDRIKDDWLVA). The N-acetyltransferase stretch occupies residues 248-455 (GVTIMDPDSI…RPISSKQTEK (208 aa)). UDP-N-acetyl-alpha-D-glucosamine is bound by residues Arg329 and Lys347. Residue His359 is the Proton acceptor of the active site. 2 residues coordinate UDP-N-acetyl-alpha-D-glucosamine: Tyr362 and Asn373. Acetyl-CoA-binding positions include Ala376, 382-383 (NY), Ala419, and Arg436.

This sequence in the N-terminal section; belongs to the N-acetylglucosamine-1-phosphate uridyltransferase family. In the C-terminal section; belongs to the transferase hexapeptide repeat family. In terms of assembly, homotrimer. Mg(2+) is required as a cofactor.

Its subcellular location is the cytoplasm. The enzyme catalyses alpha-D-glucosamine 1-phosphate + acetyl-CoA = N-acetyl-alpha-D-glucosamine 1-phosphate + CoA + H(+). It catalyses the reaction N-acetyl-alpha-D-glucosamine 1-phosphate + UTP + H(+) = UDP-N-acetyl-alpha-D-glucosamine + diphosphate. It participates in nucleotide-sugar biosynthesis; UDP-N-acetyl-alpha-D-glucosamine biosynthesis; N-acetyl-alpha-D-glucosamine 1-phosphate from alpha-D-glucosamine 6-phosphate (route II): step 2/2. Its pathway is nucleotide-sugar biosynthesis; UDP-N-acetyl-alpha-D-glucosamine biosynthesis; UDP-N-acetyl-alpha-D-glucosamine from N-acetyl-alpha-D-glucosamine 1-phosphate: step 1/1. It functions in the pathway bacterial outer membrane biogenesis; LPS lipid A biosynthesis. Functionally, catalyzes the last two sequential reactions in the de novo biosynthetic pathway for UDP-N-acetylglucosamine (UDP-GlcNAc). The C-terminal domain catalyzes the transfer of acetyl group from acetyl coenzyme A to glucosamine-1-phosphate (GlcN-1-P) to produce N-acetylglucosamine-1-phosphate (GlcNAc-1-P), which is converted into UDP-GlcNAc by the transfer of uridine 5-monophosphate (from uridine 5-triphosphate), a reaction catalyzed by the N-terminal domain. This Acaryochloris marina (strain MBIC 11017) protein is Bifunctional protein GlmU.